Consider the following 500-residue polypeptide: Pyoverdin chromophore biosynthetic protein PvcC (500 aa).

Requires FAD as cofactor.

The protein operates within siderophore biosynthesis; pyoverdin biosynthesis. The chain is Pyoverdin chromophore biosynthetic protein PvcC (pvcC) from Pseudomonas aeruginosa (strain ATCC 15692 / DSM 22644 / CIP 104116 / JCM 14847 / LMG 12228 / 1C / PRS 101 / PAO1).